We begin with the raw amino-acid sequence, 56 residues long: Large ribosomal subunit protein bL33 (56 aa).

The protein belongs to the bacterial ribosomal protein bL33 family.

The sequence is that of Large ribosomal subunit protein bL33 from Campylobacter hominis (strain ATCC BAA-381 / DSM 21671 / CCUG 45161 / LMG 19568 / NCTC 13146 / CH001A).